Consider the following 100-residue polypeptide: Aspartyl/glutamyl-tRNA(Asn/Gln) amidotransferase subunit C (100 aa).

It belongs to the GatC family. As to quaternary structure, heterotrimer of A, B and C subunits.

The enzyme catalyses L-glutamyl-tRNA(Gln) + L-glutamine + ATP + H2O = L-glutaminyl-tRNA(Gln) + L-glutamate + ADP + phosphate + H(+). The catalysed reaction is L-aspartyl-tRNA(Asn) + L-glutamine + ATP + H2O = L-asparaginyl-tRNA(Asn) + L-glutamate + ADP + phosphate + 2 H(+). In terms of biological role, allows the formation of correctly charged Asn-tRNA(Asn) or Gln-tRNA(Gln) through the transamidation of misacylated Asp-tRNA(Asn) or Glu-tRNA(Gln) in organisms which lack either or both of asparaginyl-tRNA or glutaminyl-tRNA synthetases. The reaction takes place in the presence of glutamine and ATP through an activated phospho-Asp-tRNA(Asn) or phospho-Glu-tRNA(Gln). This Streptococcus sanguinis (strain SK36) protein is Aspartyl/glutamyl-tRNA(Asn/Gln) amidotransferase subunit C.